An 89-amino-acid polypeptide reads, in one-letter code: Small ribosomal subunit protein uS15 (89 aa).

It belongs to the universal ribosomal protein uS15 family. In terms of assembly, part of the 30S ribosomal subunit. Forms a bridge to the 50S subunit in the 70S ribosome, contacting the 23S rRNA.

One of the primary rRNA binding proteins, it binds directly to 16S rRNA where it helps nucleate assembly of the platform of the 30S subunit by binding and bridging several RNA helices of the 16S rRNA. Its function is as follows. Forms an intersubunit bridge (bridge B4) with the 23S rRNA of the 50S subunit in the ribosome. The protein is Small ribosomal subunit protein uS15 of Acidothermus cellulolyticus (strain ATCC 43068 / DSM 8971 / 11B).